The chain runs to 89 residues: Small ribosomal subunit protein uS15 (89 aa).

The protein belongs to the universal ribosomal protein uS15 family. In terms of assembly, part of the 30S ribosomal subunit. Forms a bridge to the 50S subunit in the 70S ribosome, contacting the 23S rRNA.

Its function is as follows. One of the primary rRNA binding proteins, it binds directly to 16S rRNA where it helps nucleate assembly of the platform of the 30S subunit by binding and bridging several RNA helices of the 16S rRNA. Functionally, forms an intersubunit bridge (bridge B4) with the 23S rRNA of the 50S subunit in the ribosome. This chain is Small ribosomal subunit protein uS15, found in Mycolicibacterium vanbaalenii (strain DSM 7251 / JCM 13017 / BCRC 16820 / KCTC 9966 / NRRL B-24157 / PYR-1) (Mycobacterium vanbaalenii).